We begin with the raw amino-acid sequence, 283 residues long: UPF0276 protein Anae109_1558 (283 aa).

The protein belongs to the UPF0276 family.

The sequence is that of UPF0276 protein Anae109_1558 from Anaeromyxobacter sp. (strain Fw109-5).